A 247-amino-acid polypeptide reads, in one-letter code: Pleckstrin homology domain-containing family F member 2 (247 aa).

The region spanning 35-131 (VLIGEGVLTK…WMSHINKCVS (97 aa)) is the PH domain. The FYVE-type zinc-finger motif lies at 152-212 (DSEATVCMRC…VCEFCYKQLS (61 aa)). Residues Cys-158, Cys-161, Cys-175, Cys-178, Cys-183, Cys-186, Cys-204, and Cys-207 each contribute to the Zn(2+) site. The interval 213–247 (TGATLPPRSDSYSRQGSDFGSNNISDDDDDDDSSD) is disordered. The segment covering 222–236 (DSYSRQGSDFGSNNI) has biased composition (polar residues). A compositionally biased stretch (acidic residues) spans 237-247 (SDDDDDDDSSD).

It localises to the early endosome membrane. Its subcellular location is the endoplasmic reticulum. Functionally, may play a role in early endosome fusion upstream of RAB5, hence regulating receptor trafficking and fluid-phase transport. Enhances cellular sensitivity to TNF-induced apoptosis. The protein is Pleckstrin homology domain-containing family F member 2 (plekhf2) of Danio rerio (Zebrafish).